We begin with the raw amino-acid sequence, 87 residues long: Small ribosomal subunit protein uS15c (87 aa).

This sequence belongs to the universal ribosomal protein uS15 family. In terms of assembly, part of the 30S ribosomal subunit.

The protein localises to the plastid. It localises to the chloroplast. The polypeptide is Small ribosomal subunit protein uS15c (rps15) (Nymphaea alba (White water-lily)).